The following is an 89-amino-acid chain: Phytosulfokines 1 (89 aa).

Positions 1–22 (MVNPGRTARALCLLCLALLLLG) are cleaved as a signal peptide. Positions 23-79 (QDTHSRKLLLQEKHSHGVGNGTTTTQEPSRENGGSTGSNNNGQLQFDSAKWEEFHTD) are excised as a propeptide. The interval 33–70 (QEKHSHGVGNGTTTTQEPSRENGGSTGSNNNGQLQFDS) is disordered. The N-linked (GlcNAc...) asparagine glycan is linked to N42. Residues Y80 and Y82 each carry the sulfotyrosine modification. Positions 85 to 89 (DVKKP) are excised as a propeptide.

It belongs to the phytosulfokine family. Sulfation is important for activity and for the binding to a putative membrane receptor. In terms of processing, PSK-alpha is produced by endopeptidase digestion. PSK-beta is produced from PSK-alpha by exopeptidase digestion. Expressed throughout the seedling. More abundant in fragments containing shoot or root apexes where cells proliferate vigorously.

Its subcellular location is the secreted. Functionally, promotes plant cell differentiation, organogenesis and somatic embryogenesis as well as cell proliferation. This Oryza sativa subsp. japonica (Rice) protein is Phytosulfokines 1 (PSK1).